The sequence spans 419 residues: Tol-Pal system protein TolB (419 aa).

The signal sequence occupies residues 1 to 19 (MFNRIISLFLLLFTGQVIA).

This sequence belongs to the TolB family. As to quaternary structure, the Tol-Pal system is composed of five core proteins: the inner membrane proteins TolA, TolQ and TolR, the periplasmic protein TolB and the outer membrane protein Pal. They form a network linking the inner and outer membranes and the peptidoglycan layer.

It localises to the periplasm. Its function is as follows. Part of the Tol-Pal system, which plays a role in outer membrane invagination during cell division and is important for maintaining outer membrane integrity. This is Tol-Pal system protein TolB from Legionella pneumophila subsp. pneumophila (strain Philadelphia 1 / ATCC 33152 / DSM 7513).